The primary structure comprises 256 residues: MTLPSSQFPDLRDRGVLVTGGGSGIGAALVEAFARQGARVAFVDIAAESSLALCEKVAAQTGQAPHFIQADLRNVEAVRAAADEAVAKLGSVRVLVNNAARDDRQALEAVTEESWDESLSVNLRHLFFMCQAVAPHMQRQGGGSIVNFSSIAFLLNMPEIPAYSTAKAGIIGLTKSLAGKLGPDNIRVNAILPGMIVTERQRRLWLTEESIARMQERQCLKRMLVADDLVGPCLFLASDSSAAMTAQAMIIDGGVF.

NAD(+) is bound by residues 20–23, 71–72, and Asn-98; these read GGGS and DL. Ser-150 provides a ligand contact to substrate. The active-site Proton acceptor is Tyr-163. Residues 163–167 and Ile-196 each bind NAD(+); that span reads YSTAK.

It belongs to the short-chain dehydrogenases/reductases (SDR) family.

In terms of biological role, involved in the degradation of galactose via the DeLey-Doudoroff pathway. Catalyzes the oxidation of galactose in the presence of NAD(+). Uses NAD(+) as a hydrogen acceptor more efficiently than NADP(+). The polypeptide is Probable galactose dehydrogenase GalD (galD) (Rhizobium meliloti (strain 1021) (Ensifer meliloti)).